The chain runs to 128 residues: Fluoride-specific ion channel FluC (128 aa).

Transmembrane regions (helical) follow at residues 4 to 24, 37 to 57, 72 to 92, and 101 to 121; these read LLLV…VGVQ, TFIV…WLAL, VGVM…ALMI, and FTYT…GLLI. G76 and T79 together coordinate Na(+).

The protein belongs to the fluoride channel Fluc/FEX (TC 1.A.43) family.

It is found in the cell inner membrane. The catalysed reaction is fluoride(in) = fluoride(out). Its activity is regulated as follows. Na(+) is not transported, but it plays an essential structural role and its presence is essential for fluoride channel function. Its function is as follows. Fluoride-specific ion channel. Important for reducing fluoride concentration in the cell, thus reducing its toxicity. In Caulobacter sp. (strain K31), this protein is Fluoride-specific ion channel FluC.